Reading from the N-terminus, the 309-residue chain is RING finger protein mug145 (309 aa).

A helical transmembrane segment spans residues 23 to 43 (ILLFALVIILSVIFINFFFFY). An RING-type; atypical zinc finger spans residues 205–247 (CIICYADYAFDDILRVLPCEHVFHTQCIDTWMTTMKASCPLCN).

Its subcellular location is the membrane. Functionally, has a role in meiosis. This is RING finger protein mug145 (mug145) from Schizosaccharomyces pombe (strain 972 / ATCC 24843) (Fission yeast).